The primary structure comprises 161 residues: MPSFDVVSEANMIEVKNAIEQSNKEISTRFDFKGSDARVEQKERELTLFADDDFKLGQVKDVLIGKLAKRNVDVRFLDYGKVEKIGGDKLKQIVTVKKGVTGDLAKKIVRLVKDSKIKVQASIQGDAVRVNGTKRDDLQSVIAMLRKDVTDTPLDFNNFRD.

Belongs to the YajQ family.

Functionally, nucleotide-binding protein. This Burkholderia lata (strain ATCC 17760 / DSM 23089 / LMG 22485 / NCIMB 9086 / R18194 / 383) protein is Nucleotide-binding protein Bcep18194_A5887.